The chain runs to 293 residues: 4-diphosphocytidyl-2-C-methyl-D-erythritol kinase (293 aa).

Lysine 10 is an active-site residue. ATP is bound at residue 94 to 104 (PVSAGLAGGSS). Aspartate 136 is a catalytic residue.

It belongs to the GHMP kinase family. IspE subfamily.

It catalyses the reaction 4-CDP-2-C-methyl-D-erythritol + ATP = 4-CDP-2-C-methyl-D-erythritol 2-phosphate + ADP + H(+). The protein operates within isoprenoid biosynthesis; isopentenyl diphosphate biosynthesis via DXP pathway; isopentenyl diphosphate from 1-deoxy-D-xylulose 5-phosphate: step 3/6. Functionally, catalyzes the phosphorylation of the position 2 hydroxy group of 4-diphosphocytidyl-2C-methyl-D-erythritol. This chain is 4-diphosphocytidyl-2-C-methyl-D-erythritol kinase, found in Listeria monocytogenes serovar 1/2a (strain ATCC BAA-679 / EGD-e).